We begin with the raw amino-acid sequence, 834 residues long: Leucine--tRNA ligase (834 aa).

A 'HIGH' region motif is present at residues 40–50 (PYPSGNIHMGH). The short motif at 586–590 (KMSKS) is the 'KMSKS' region element. Lys589 is an ATP binding site.

It belongs to the class-I aminoacyl-tRNA synthetase family.

It localises to the cytoplasm. It catalyses the reaction tRNA(Leu) + L-leucine + ATP = L-leucyl-tRNA(Leu) + AMP + diphosphate. This chain is Leucine--tRNA ligase, found in Nitratidesulfovibrio vulgaris (strain DSM 19637 / Miyazaki F) (Desulfovibrio vulgaris).